Reading from the N-terminus, the 478-residue chain is MVQLNQDFIKSIAKDMPAHLSMDDFISYSSKPLRPSIRINTLKISSQDFIALMAPKGWTLEPIPWCQDGFWISLDSDVQLGNTVEHLQGLFYIQEASSMLPPIALFSTKTDKAEHTILDMASAPGSKTTQIAAMMDNSGLLIANEYSSSRVKVLHANVLRMGVSNTALTHFDARVFGEYLYDQFDAILLDAPCSGEGTIRKDPLALNNWGLAENSAIAETQKALLESAFLALKTGGSLVYSTCALSKLENQDVCEHLRSTFPEAVEFESLATLFPDADKACTDEGFLHVWPQIYDSEGFFIAKITKTCDVERQKPEPKRQKNFPFTPISSKVELELRQYFKQTFDIDIPTDDMLMVRDLEYWLFPAGMKTLIGKMRFQRIGVKLADGLKKGFKARHEAIVALAEKSTGYELSQAQAIQYLMGRDIPLVDGGKPQGELIVTYHGSALGVAKHLGSRLKNTLPRDLVRDKIADSDASTTA.

S-adenosyl-L-methionine is bound by residues 121-127, Glu-145, Asp-172, and Asp-190; that span reads ASAPGSK. Catalysis depends on Cys-243, which acts as the Nucleophile.

Belongs to the class I-like SAM-binding methyltransferase superfamily. RsmB/NOP family.

It localises to the cytoplasm. It catalyses the reaction cytidine(1407) in 16S rRNA + S-adenosyl-L-methionine = 5-methylcytidine(1407) in 16S rRNA + S-adenosyl-L-homocysteine + H(+). In terms of biological role, specifically methylates the cytosine at position 1407 (m5C1407) of 16S rRNA. The polypeptide is Ribosomal RNA small subunit methyltransferase F (Shewanella sediminis (strain HAW-EB3)).